The sequence spans 711 residues: Polyribonucleotide nucleotidyltransferase (711 aa).

D486 and D492 together coordinate Mg(2+). In terms of domain architecture, KH spans 553 to 612 (PRIHTIKISTDKIKDVIGKGGSVIRALTEETGTTIEIEDDGTVKIAATDGEKAKYAIRRI). One can recognise an S1 motif domain in the interval 622-690 (GRIYNGKVTR…RQGRVRLSIK (69 aa)). The disordered stretch occupies residues 689–711 (IKEATEQTQPAAAPEAPTSEQGE). Low complexity predominate over residues 694 to 711 (EQTQPAAAPEAPTSEQGE).

This sequence belongs to the polyribonucleotide nucleotidyltransferase family. As to quaternary structure, component of the RNA degradosome, which is a multiprotein complex involved in RNA processing and mRNA degradation. Requires Mg(2+) as cofactor.

The protein resides in the cytoplasm. It catalyses the reaction RNA(n+1) + phosphate = RNA(n) + a ribonucleoside 5'-diphosphate. Its function is as follows. Involved in mRNA degradation. Catalyzes the phosphorolysis of single-stranded polyribonucleotides processively in the 3'- to 5'-direction. The sequence is that of Polyribonucleotide nucleotidyltransferase from Salmonella arizonae (strain ATCC BAA-731 / CDC346-86 / RSK2980).